Consider the following 232-residue polypeptide: A-type ATP synthase subunit D (232 aa).

A disordered region spans residues Lys-200 to Asp-232. Over residues Glu-209–Asp-222 the composition is skewed to acidic residues.

This sequence belongs to the V-ATPase D subunit family. As to quaternary structure, has multiple subunits with at least A(3), B(3), C, D, E, F, H, I and proteolipid K(x).

The protein resides in the cell membrane. In terms of biological role, component of the A-type ATP synthase that produces ATP from ADP in the presence of a proton gradient across the membrane. The sequence is that of A-type ATP synthase subunit D from Haloquadratum walsbyi (strain DSM 16790 / HBSQ001).